Reading from the N-terminus, the 434-residue chain is Purple acid phosphatase 22 (434 aa).

A signal peptide spans 1 to 22 (MKLFGLFLSFTLLFLCPFISQA). N116 is a glycosylation site (N-linked (GlcNAc...) asparagine). The Fe cation site is built by D148, D175, and Y178. D175 provides a ligand contact to Zn(2+). The Zn(2+) site is built by N208 and H292. N208 is a binding site for substrate. The active-site Proton donor is the H302. H329 is a binding site for Zn(2+). 329 to 331 (HVH) contributes to the substrate binding site. Residue H331 participates in Fe cation binding. The N-linked (GlcNAc...) asparagine glycan is linked to N403.

The protein belongs to the metallophosphoesterase superfamily. Purple acid phosphatase family. As to quaternary structure, homodimer. Fe cation is required as a cofactor. It depends on Zn(2+) as a cofactor. Expressed in roots, stems, leaves, flowers and siliques.

The protein resides in the secreted. The enzyme catalyses a phosphate monoester + H2O = an alcohol + phosphate. The polypeptide is Purple acid phosphatase 22 (PAP22) (Arabidopsis thaliana (Mouse-ear cress)).